The chain runs to 383 residues: F-box/kelch-repeat protein At2g22030 (383 aa).

Residues Ser-23–Leu-71 form the F-box domain. Kelch repeat units lie at residues Lys-130–Gly-175, Lys-176–Tyr-220, and Gly-269–Asp-317.

This Arabidopsis thaliana (Mouse-ear cress) protein is F-box/kelch-repeat protein At2g22030.